A 126-amino-acid polypeptide reads, in one-letter code: Flagellar protein FliT (126 aa).

The segment at 1 to 50 (MASPHRLLKDYQQLLSLSQKILHLAVNGQWDTLVEQEIVYVQSVEGLVNT) is required for homodimerization. Positions 60–98 (MRLHLRQILQEVMDNEAKVKQLLQKRMDELSSLMGQSLK) are fliD binding.

Belongs to the FliT family. In terms of assembly, homodimer. Interacts with FliD and FlhC.

The protein resides in the cytoplasm. It is found in the cytosol. Dual-function protein that regulates the transcription of class 2 flagellar operons and that also acts as an export chaperone for the filament-capping protein FliD. As a transcriptional regulator, acts as an anti-FlhDC factor; it directly binds FlhC, thus inhibiting the binding of the FlhC/FlhD complex to class 2 promoters, resulting in decreased expression of class 2 flagellar operons. As a chaperone, effects FliD transition to the membrane by preventing its premature polymerization, and by directing it to the export apparatus. The polypeptide is Flagellar protein FliT (Pectobacterium carotovorum subsp. carotovorum (strain PC1)).